Here is a 90-residue protein sequence, read N- to C-terminus: Small ribosomal subunit protein uS15 (90 aa).

The protein belongs to the universal ribosomal protein uS15 family. As to quaternary structure, part of the 30S ribosomal subunit. Forms a bridge to the 50S subunit in the 70S ribosome, contacting the 23S rRNA.

Functionally, one of the primary rRNA binding proteins, it binds directly to 16S rRNA where it helps nucleate assembly of the platform of the 30S subunit by binding and bridging several RNA helices of the 16S rRNA. Forms an intersubunit bridge (bridge B4) with the 23S rRNA of the 50S subunit in the ribosome. The sequence is that of Small ribosomal subunit protein uS15 from Campylobacter fetus subsp. fetus (strain 82-40).